Here is a 239-residue protein sequence, read N- to C-terminus: Transcriptional regulatory protein BtsR (239 aa).

Residues 3-116 (KVLIVDDEPL…RLEKTLARLR (114 aa)) enclose the Response regulatory domain. Asp-54 carries the post-translational modification 4-aspartylphosphate. Residues 137–239 (IPCTGHSRIY…LKSLKEAIGL (103 aa)) enclose the HTH LytTR-type domain.

Post-translationally, phosphorylated by BtsS.

Member of the two-component regulatory system BtsS/BtsR. BtsR regulates expression of btsT by binding to its promoter region. The chain is Transcriptional regulatory protein BtsR from Shigella flexneri.